Consider the following 130-residue polypeptide: Histone H2A type 4 (130 aa).

Ser-2 bears the Phosphoserine; by RPS6KA5 mark. Position 4 is a citrulline; alternate (Arg-4). A Symmetric dimethylarginine; by PRMT5; alternate modification is found at Arg-4. N6-(2-hydroxyisobutyryl)lysine; alternate is present on residues Lys-6 and Lys-10. N6-acetyllysine; alternate occurs at positions 6 and 10. Position 10 is an N6-lactoyllysine; alternate (Lys-10). 3 positions are modified to N6-(2-hydroxyisobutyryl)lysine: Lys-75, Lys-76, and Lys-96. Lys-96 is modified (N6-glutaryllysine; alternate). An N5-methylglutamine modification is found at Gln-105. Lys-119 carries the N6-(2-hydroxyisobutyryl)lysine; alternate modification. N6-glutaryllysine; alternate occurs at positions 119 and 120. Residue Lys-119 is modified to N6-crotonyllysine; alternate. The residue at position 120 (Lys-120) is an N6-crotonyllysine. Thr-121 is modified (phosphothreonine; by DCAF1). Lys-126 bears the N6-glutaryllysine; alternate mark. Lys-126 is subject to N6-crotonyllysine; alternate. A [ST]-Q motif motif is present at residues Ser-127–Gln-128.

It belongs to the histone H2A family. In terms of assembly, the nucleosome is a histone octamer containing two molecules each of H2A, H2B, H3 and H4 assembled in one H3-H4 heterotetramer and two H2A-H2B heterodimers. The octamer wraps approximately 147 bp of DNA. In terms of processing, deiminated on Arg-4 in granulocytes upon calcium entry. Monoubiquitination of Lys-120 (H2AK119Ub) by RING1, TRIM37 and RNF2/RING2 complex gives a specific tag for epigenetic transcriptional repression and participates in X chromosome inactivation of female mammals. It is involved in the initiation of both imprinted and random X inactivation. Ubiquitinated H2A is enriched in inactive X chromosome chromatin. Ubiquitination of H2A functions downstream of methylation of 'Lys-27' of histone H3 (H3K27me). H2AK119Ub by RNF2/RING2 can also be induced by ultraviolet and may be involved in DNA repair. Following DNA double-strand breaks (DSBs), it is ubiquitinated through 'Lys-63' linkage of ubiquitin moieties by the E2 ligase UBE2N and the E3 ligases RNF8 and RNF168, leading to the recruitment of repair proteins to sites of DNA damage. Ubiquitination at Lys-14 and Lys-16 (H2AK13Ub and H2AK15Ub, respectively) in response to DNA damage is initiated by RNF168 that mediates monoubiquitination at these 2 sites, and 'Lys-63'-linked ubiquitin are then conjugated to monoubiquitin; RNF8 is able to extend 'Lys-63'-linked ubiquitin chains in vitro. H2AK119Ub and ionizing radiation-induced 'Lys-63'-linked ubiquitination (H2AK13Ub and H2AK15Ub) are distinct events. Post-translationally, phosphorylation on Ser-2 (H2AS1ph) is enhanced during mitosis. Phosphorylation on Ser-2 by RPS6KA5/MSK1 directly represses transcription. Acetylation of H3 inhibits Ser-2 phosphorylation by RPS6KA5/MSK1. Phosphorylation at Thr-121 (H2AT120ph) by DCAF1 is present in the regulatory region of many tumor suppresor genes and down-regulates their transcription. In terms of processing, symmetric dimethylation on Arg-4 by the PRDM1/PRMT5 complex may play a crucial role in the germ-cell lineage. Glutamine methylation at Gln-105 (H2AQ104me) by FBL is specifically dedicated to polymerase I. It is present at 35S ribosomal DNA locus and impairs binding of the FACT complex. Post-translationally, crotonylation (Kcr) is specifically present in male germ cells and marks testis-specific genes in post-meiotic cells, including X-linked genes that escape sex chromosome inactivation in haploid cells. Crotonylation marks active promoters and enhancers and confers resistance to transcriptional repressors. It is also associated with post-meiotically activated genes on autosomes. In terms of processing, lactylated in macrophages by EP300/P300 by using lactoyl-CoA directly derived from endogenous or exogenous lactate, leading to stimulates gene transcription. Testis.

It is found in the nucleus. Its subcellular location is the chromosome. Its function is as follows. Core component of nucleosome. Nucleosomes wrap and compact DNA into chromatin, limiting DNA accessibility to the cellular machineries which require DNA as a template. Histones thereby play a central role in transcription regulation, DNA repair, DNA replication and chromosomal stability. DNA accessibility is regulated via a complex set of post-translational modifications of histones, also called histone code, and nucleosome remodeling. The sequence is that of Histone H2A type 4 from Rattus norvegicus (Rat).